The sequence spans 285 residues: uncharacterized protein (285 aa).

Residues 1–25 (MANQKKKTLPPQHQNQQPGFEYLMD) are disordered. 45-69 (IITGGDSGIGRAVSVLFAKEGANVV) is a binding site for NADP(+). Serine 177 is a binding site for substrate. The active-site Proton acceptor is the tyrosine 190.

It belongs to the short-chain dehydrogenases/reductases (SDR) family.

This is an uncharacterized protein from Bacillus subtilis (strain 168).